The following is a 477-amino-acid chain: UDP-galactose-lipid carrier transferase (477 aa).

Helical transmembrane passes span 16–36, 52–72, 93–113, 115–135, 175–195, and 284–304; these read SLALSDLIFFNIALALAIVLI, LDLKIATHILLSVICVGWFWV, TILIFSIVDLSVSALSKWELS, WIWILTWLLSMAMVPFGRACV, VIAFYDVDGSQTALELFGVPV, and FDLVGALSIITLLLPALVILI. At 305 to 477 the chain is on the cytoplasmic side; that stretch reads FMVSRDGGAP…GVVLKRDGAY (173 aa).

The protein belongs to the bacterial sugar transferase family.

The protein localises to the cell membrane. It participates in glycan metabolism; exopolysaccharide biosynthesis. Involved in the biosynthesis of amylovoran which functions as a virulence factor. May act as a sugar transferase and may be involved in the export of the repeating unit by flipping the lipid carrier to the periplasmic face of the inner membrane. In Erwinia amylovora (Fire blight bacteria), this protein is UDP-galactose-lipid carrier transferase (amsG).